Here is a 459-residue protein sequence, read N- to C-terminus: MAGYLSESDFVMVEEGFSTRDLLEELTLGASQATSGKVAAFFVADLGAVVRKHFCFLKHLPRVRPFYAVGCNSSLGVLKVLAELGLGFSCANKAEMELVQHIGVPASKIICANPCKQVAQIKYAAKHGVRLLSFDNEVELAKVVKSHPSAKMVLCIATQDSHSLNHLSLRFGASLKSCRHLLENAKKSHVEVVGVSFHIGSGCPDPQAYAQSIADARLVFQMGEELGHTMNILDLGGGFPGLEGAKVRFEEMASVINSALDLYFPEGCGVDILAELGRYYVTSAFTVAVSIVAKREVLDQASREEQTGAAPKSIVYYLDEGVYGVFNSVLFDNTCPTPALQKKPSADQPLYSSSLWGPAVEGCDCVAEGLWLPQLQVGDWLVFDNMGAYTVDTKSLLGGTQARRVTYAMSRLAWEALRGQLLPAEEDQDAEGVCKPLSCGWEITDTLCVGPVFTPASIM.

Residues glutamine 117–leucine 140 form a necessary for polyamine uptake stimulation region.

It belongs to the Orn/Lys/Arg decarboxylase class-II family. ODC antizyme inhibitor subfamily. In terms of assembly, monomer. Interacts with OAZ1, OAZ2 and OAZ3; this interaction disrupts the interaction between the antizyme and ODC1. Does not form a heterodimer with ODC1. Post-translationally, ubiquitinated, leading to its proteasomal degradation; a process that is reduced in presence of antizymes. May also be degraded through the lysosomal degradative pathway in a proteasomal-independent manner. Expressed in the medulla and chromaffin cells of the adrenal gland. Expressed in the Langerhans islets of the pancreas. Expressed in the inner part of the seminiferous tubules and in spermatozoa located in the lumen of the epididymis of the testis. Expressed in the cortex, hippocampus and cerebellum of the brain. Expressed in normal and neoplastic mast cells (MC) (at protein level). Expressed in testis, pancreas and brain. Expressed throughout the differentiation process from spermatids to spermatozoa in the inner part of the seminiferous tubules. Expressed in the kidney: expressed in the superficial (Cs) and the deep layer (Cd) of the cortex region and in the outer stripe (OS), inner stripe (IS) and the inner medulla papilla (IM) of the medulla region.

The protein resides in the nucleus. It is found in the cytoplasm. It localises to the perinuclear region. The protein localises to the membrane. Its subcellular location is the cytoplasmic vesicle. The protein resides in the endoplasmic reticulum-Golgi intermediate compartment. It is found in the golgi apparatus. It localises to the cis-Golgi network. The protein localises to the trans-Golgi network. Its subcellular location is the cytoplasmic granule. The protein resides in the cell projection. It is found in the axon. It localises to the dendrite. The protein localises to the perikaryon. Antizyme inhibitor (AZI) protein that positively regulates ornithine decarboxylase (ODC) activity and polyamine uptake. AZI is an enzymatically inactive ODC homolog that counteracts the negative effect of ODC antizymes (AZs) OAZ1, OAZ2 and OAZ3 on ODC activity by competing with ODC for antizyme-binding. Inhibits antizyme-dependent ODC degradation and releases ODC monomers from their inactive complex with antizymes, leading to formation of the catalytically active ODC homodimer and restoring polyamine production. Participates in the morphological integrity of the trans-Golgi network (TGN) and functions as a regulator of intracellular secretory vesicle trafficking. In Mus musculus (Mouse), this protein is Antizyme inhibitor 2 (Azin2).